The following is an 820-amino-acid chain: Penicillin-binding protein 1A (820 aa).

The segment at 1 to 120 (MNSDGRHHQS…PAGRLPQPRV (120 aa)) is disordered. The segment covering 41-53 (TDDRSAPHADSIE) has biased composition (basic and acidic residues). Residues 139-159 (LTAAVVILLPMVTFTMAYLIV) form a helical membrane-spanning segment. Residues 180 to 360 (GSEIAKIVPP…RWNWVLDGMV (181 aa)) form a transglycosylase region. The Proton donor; for transglycosylase activity role is filled by E213. A transpeptidase region spans residues 453–743 (AVVSIDPHNG…PSDIWKATMD (291 aa)). Residue S487 is the Acyl-ester intermediate; for transpeptidase activity of the active site. The segment covering 792–804 (ITIPIGPPTTITL) has biased composition (low complexity). Residues 792-820 (ITIPIGPPTTITLAPPPPAPPAATPTPPP) form a disordered region. Residues 805–820 (APPPPAPPAATPTPPP) are compositionally biased toward pro residues.

The protein in the N-terminal section; belongs to the glycosyltransferase 51 family. In the C-terminal section; belongs to the transpeptidase family. In terms of assembly, interacts with RipA via its transpeptidase domain (residues 561-820).

Its subcellular location is the cell membrane. The catalysed reaction is [GlcNAc-(1-&gt;4)-Mur2Ac(oyl-L-Ala-gamma-D-Glu-L-Lys-D-Ala-D-Ala)](n)-di-trans,octa-cis-undecaprenyl diphosphate + beta-D-GlcNAc-(1-&gt;4)-Mur2Ac(oyl-L-Ala-gamma-D-Glu-L-Lys-D-Ala-D-Ala)-di-trans,octa-cis-undecaprenyl diphosphate = [GlcNAc-(1-&gt;4)-Mur2Ac(oyl-L-Ala-gamma-D-Glu-L-Lys-D-Ala-D-Ala)](n+1)-di-trans,octa-cis-undecaprenyl diphosphate + di-trans,octa-cis-undecaprenyl diphosphate + H(+). It catalyses the reaction Preferential cleavage: (Ac)2-L-Lys-D-Ala-|-D-Ala. Also transpeptidation of peptidyl-alanyl moieties that are N-acyl substituents of D-alanine.. Its pathway is cell wall biogenesis; peptidoglycan biosynthesis. Cell wall formation. Synthesis of cross-linked peptidoglycan from the lipid intermediates. The enzyme has a penicillin-insensitive transglycosylase N-terminal domain (formation of linear glycan strands) and a penicillin-sensitive transpeptidase C-terminal domain (cross-linking of the peptide subunits). Has little peptidoglycan hydrolytic activity; however it inhibits the synergistic peptidoglycan hydrolysis of RipA plus RpfB. In Mycobacterium tuberculosis (strain ATCC 25618 / H37Rv), this protein is Penicillin-binding protein 1A (ponA1).